Here is a 931-residue protein sequence, read N- to C-terminus: Up-regulator of cell proliferation (931 aa).

Position 3 is a phosphoserine (S3). The VLIG-type G domain maps to 689–929 (RSRLVVLSTV…NIQQLIELVR (241 aa)).

Belongs to the TRAFAC class dynamin-like GTPase superfamily. Very large inducible GTPase (VLIG) family. As to expression, strongly expressed in hepatitis B virus-infected liver and in HCC cells. Also highly expressed in well-differentiated gastric cancer tissues and various gastric cancer cell lines.

Its subcellular location is the cytoplasm. The protein resides in the nucleus. Functionally, may be involved in cell cycle progression through the regulation of cyclin D1 expression. May participate in the development of hepatocellular carcinoma (HCC) by promoting hepatocellular growth and survival. May play an important role in development of gastric cancer. The protein is Up-regulator of cell proliferation (URGCP) of Homo sapiens (Human).